The primary structure comprises 255 residues: 4-hydroxy-tetrahydrodipicolinate reductase (255 aa).

Residues G9–M14, D35, G89–T91, and A115–F118 each bind NAD(+). H145 (proton donor/acceptor) is an active-site residue. H146 contacts (S)-2,3,4,5-tetrahydrodipicolinate. Residue K149 is the Proton donor of the active site. G155–T156 is a (S)-2,3,4,5-tetrahydrodipicolinate binding site.

It belongs to the DapB family.

The protein localises to the cytoplasm. It catalyses the reaction (S)-2,3,4,5-tetrahydrodipicolinate + NAD(+) + H2O = (2S,4S)-4-hydroxy-2,3,4,5-tetrahydrodipicolinate + NADH + H(+). It carries out the reaction (S)-2,3,4,5-tetrahydrodipicolinate + NADP(+) + H2O = (2S,4S)-4-hydroxy-2,3,4,5-tetrahydrodipicolinate + NADPH + H(+). It functions in the pathway amino-acid biosynthesis; L-lysine biosynthesis via DAP pathway; (S)-tetrahydrodipicolinate from L-aspartate: step 4/4. Catalyzes the conversion of 4-hydroxy-tetrahydrodipicolinate (HTPA) to tetrahydrodipicolinate. This Streptococcus pneumoniae serotype 19F (strain G54) protein is 4-hydroxy-tetrahydrodipicolinate reductase.